The chain runs to 42 residues: Photosystem II reaction center protein J (42 aa).

The helical transmembrane segment at 10 to 30 (IPLWLVATVAGLAVIALLGVF) threads the bilayer.

It belongs to the PsbJ family. PSII is composed of 1 copy each of membrane proteins PsbA, PsbB, PsbC, PsbD, PsbE, PsbF, PsbH, PsbI, PsbJ, PsbK, PsbL, PsbM, PsbT, PsbX, PsbY, PsbZ, Psb30/Ycf12, at least 3 peripheral proteins of the oxygen-evolving complex and a large number of cofactors. It forms dimeric complexes.

It localises to the plastid. It is found in the chloroplast thylakoid membrane. One of the components of the core complex of photosystem II (PSII). PSII is a light-driven water:plastoquinone oxidoreductase that uses light energy to abstract electrons from H(2)O, generating O(2) and a proton gradient subsequently used for ATP formation. It consists of a core antenna complex that captures photons, and an electron transfer chain that converts photonic excitation into a charge separation. The protein is Photosystem II reaction center protein J of Chlorokybus atmophyticus (Soil alga).